Reading from the N-terminus, the 148-residue chain is uncharacterized protein (148 aa).

The segment covering Met-1–Arg-17 has biased composition (low complexity). 2 disordered regions span residues Met-1–Pro-86 and Arg-122–Cys-148. Residues Arg-38–Pro-57 show a composition bias toward basic residues. The span at Gln-134–Cys-148 shows a compositional bias: polar residues.

Belongs to the Epstein-Barr virus BLLF2 family.

This is an uncharacterized protein from Homo sapiens (Human).